Consider the following 479-residue polypeptide: Ubiquinone biosynthesis monooxygenase COQ6, mitochondrial (479 aa).

A mitochondrion-targeting transit peptide spans 1-17 (MFFSKVMLTRRILVRGL).

This sequence belongs to the UbiH/COQ6 family. Component of a multi-subunit COQ enzyme complex, composed of at least COQ3, COQ4, COQ5, COQ6, COQ7 and COQ9. Requires FAD as cofactor.

The protein resides in the mitochondrion inner membrane. It catalyses the reaction 4-hydroxy-3-(all-trans-hexaprenyl)benzoate + 2 reduced [2Fe-2S]-[ferredoxin] + O2 + 2 H(+) = 3,4-dihydroxy-5-(all-trans-hexaprenyl)benzoate + 2 oxidized [2Fe-2S]-[ferredoxin] + H2O. It carries out the reaction 2-methoxy-6-(all-trans-hexaprenyl)phenol + 2 reduced [2Fe-2S]-[ferredoxin] + O2 + 2 H(+) = 2-methoxy-6-(all-trans-hexaprenyl)benzene-1,4-diol + 2 oxidized [2Fe-2S]-[ferredoxin] + H2O. The catalysed reaction is 4-amino-3-(all-trans-hexaprenyl)benzoate + 2 reduced [2Fe-2S]-[ferredoxin] + O2 + 2 H(+) = 4-amino-5-hydroxy-3-(all-trans-hexaprenyl)benzoate + 2 oxidized [2Fe-2S]-[ferredoxin] + H2O. The enzyme catalyses 4-amino-5-hydroxy-3-(all-trans-hexaprenyl)benzoate + 4 reduced [2Fe-2S]-[ferredoxin] + O2 + 5 H(+) = 3,4-dihydroxy-5-(all-trans-hexaprenyl)benzoate + 4 oxidized [2Fe-2S]-[ferredoxin] + NH4(+) + H2O. The protein operates within cofactor biosynthesis; ubiquinone biosynthesis. Its function is as follows. FAD-dependent monooxygenase required for two non-consecutive steps during ubiquinone biosynthesis. Required for the C5-ring hydroxylation during ubiquinone biosynthesis by catalyzing the hydroxylation of 4-hydroxy-3-(all-trans-hexaprenyl)benzoic acid to 3,4-dihydroxy-5-(all-trans-hexaprenyl)benzoic acid. Also acts downstream of COQ4, for the C1-hydroxylation during ubiquinone biosynthesis by catalyzing the hydroxylation of 2-methoxy-6-(all-trans-hexaprenyl)phenol to 2-methoxy-6-(all-trans-hexaprenyl)benzene-1,4-diol. The electrons required for the hydroxylation reaction are funneled indirectly from NADPH via ferredoxin (YAH1) and ferredoxin reductase (ARH1) to COQ6. Can also convert 3-hexaprenyl-4-aminobenzoic acid (HAB), a COQ2-prenylated pABA, to DHHB in a two step process. HAB is first hydroxylated at C5 to yield 3-hexaprenyl-4-amino-5-hydroxybenzoic acid (HHAB) which is further deaminated at C4 by COQ6 to produce DHHB. The protein is Ubiquinone biosynthesis monooxygenase COQ6, mitochondrial of Saccharomyces cerevisiae (strain ATCC 204508 / S288c) (Baker's yeast).